We begin with the raw amino-acid sequence, 178 residues long: Large ribosomal subunit protein uL13m (178 aa).

Serine 2 is modified (N-acetylserine).

It belongs to the universal ribosomal protein uL13 family. In terms of assembly, component of the mitochondrial large ribosomal subunit (mt-LSU). Mature mammalian 55S mitochondrial ribosomes consist of a small (28S) and a large (39S) subunit. The 28S small subunit contains a 12S ribosomal RNA (12S mt-rRNA) and 30 different proteins. The 39S large subunit contains a 16S rRNA (16S mt-rRNA), a copy of mitochondrial valine transfer RNA (mt-tRNA(Val)), which plays an integral structural role, and 52 different proteins. Interacts with OXA1L.

The protein localises to the mitochondrion. In Homo sapiens (Human), this protein is Large ribosomal subunit protein uL13m (MRPL13).